We begin with the raw amino-acid sequence, 584 residues long: MFS-type transporter gkaD (584 aa).

Low complexity predominate over residues 1 to 11 (MAVDTETTTTT). Residues 1 to 60 (MAVDTETTTTTIPVTDSDRIDDQNNLTSNAIPHASEKTVPDSPASEQNEVSDESEDKPSK) are disordered. The N-linked (GlcNAc...) asparagine glycan is linked to Asn-25. Transmembrane regions (helical) follow at residues 65-85 (FGFY…SLEA), 99-119 (LGGA…QTAF), 134-154 (WPMI…GGSK), 167-187 (GIGS…LLPL), 196-216 (MIVS…GLIV), 223-243 (WVFY…FFFL), 262-282 (WIGN…LSWA), and 293-313 (VVVP…YEGS). A glycan (N-linked (GlcNAc...) asparagine) is linked at Asn-328. 6 consecutive transmembrane segments (helical) span residues 334-354 (AFAV…FLPV), 369-389 (VQLL…GTLL), 398-418 (LQHG…LLDA), 425-445 (WVGY…VLLP), 462-482 (TWSF…TAVF), and 536-556 (LNVV…LVFL).

Belongs to the major facilitator superfamily.

Its subcellular location is the membrane. MFS-type transporter; part of the gene cluster that mediates the biosynthesis of GKK1032, fungal natural products containing a macrocyclic para-cyclophane connected to a decahydrofluorene ring system that show potent antitumor activities. The polypeptide is MFS-type transporter gkaD (Penicillium citrinum).